We begin with the raw amino-acid sequence, 372 residues long: Carbamoyl phosphate synthase small chain (372 aa).

Residues 1 to 184 are CPSase; it reads MKAYIYLEND…SFQKFNDAKR (184 aa). L-glutamine contacts are provided by Ser-45, Gly-240, and Gly-242. Residues 188–372 enclose the Glutamine amidotransferase type-1 domain; that stretch reads KVAVIDYGVK…YIFKEFMNLM (185 aa). Cys-268 (nucleophile) is an active-site residue. Leu-269, Gln-272, Asn-310, and Tyr-313 together coordinate L-glutamine. Residues His-351 and Glu-353 contribute to the active site.

It belongs to the CarA family. Composed of two chains; the small (or glutamine) chain promotes the hydrolysis of glutamine to ammonia, which is used by the large (or ammonia) chain to synthesize carbamoyl phosphate. Tetramer of heterodimers (alpha,beta)4.

It carries out the reaction hydrogencarbonate + L-glutamine + 2 ATP + H2O = carbamoyl phosphate + L-glutamate + 2 ADP + phosphate + 2 H(+). The catalysed reaction is L-glutamine + H2O = L-glutamate + NH4(+). It functions in the pathway amino-acid biosynthesis; L-arginine biosynthesis; carbamoyl phosphate from bicarbonate: step 1/1. The protein operates within pyrimidine metabolism; UMP biosynthesis via de novo pathway; (S)-dihydroorotate from bicarbonate: step 1/3. Functionally, small subunit of the glutamine-dependent carbamoyl phosphate synthetase (CPSase). CPSase catalyzes the formation of carbamoyl phosphate from the ammonia moiety of glutamine, carbonate, and phosphate donated by ATP, constituting the first step of 2 biosynthetic pathways, one leading to arginine and/or urea and the other to pyrimidine nucleotides. The small subunit (glutamine amidotransferase) binds and cleaves glutamine to supply the large subunit with the substrate ammonia. The chain is Carbamoyl phosphate synthase small chain from Campylobacter jejuni subsp. jejuni serotype O:2 (strain ATCC 700819 / NCTC 11168).